The sequence spans 426 residues: Enolase (426 aa).

Residue glutamine 163 participates in (2R)-2-phosphoglycerate binding. Glutamate 205 serves as the catalytic Proton donor. Residues aspartate 242, glutamate 286, and aspartate 313 each coordinate Mg(2+). Positions 338, 367, 368, and 389 each coordinate (2R)-2-phosphoglycerate. Lysine 338 (proton acceptor) is an active-site residue.

This sequence belongs to the enolase family. It depends on Mg(2+) as a cofactor.

The protein localises to the cytoplasm. It is found in the secreted. The protein resides in the cell surface. The catalysed reaction is (2R)-2-phosphoglycerate = phosphoenolpyruvate + H2O. Its pathway is carbohydrate degradation; glycolysis; pyruvate from D-glyceraldehyde 3-phosphate: step 4/5. Functionally, catalyzes the reversible conversion of 2-phosphoglycerate (2-PG) into phosphoenolpyruvate (PEP). It is essential for the degradation of carbohydrates via glycolysis. The chain is Enolase from Helicobacter pylori (strain Shi470).